The primary structure comprises 312 residues: Dihydroorotate dehydrogenase B (NAD(+)), catalytic subunit (312 aa).

Residues Ser23 and 47–48 (KA) each bind FMN. Substrate is bound by residues Lys47 and 71–75 (NAIGL). The FMN site is built by Asn103 and Asn131. A substrate-binding site is contributed by Asn131. Catalysis depends on Cys134, which acts as the Nucleophile. Lys171 and Ile197 together coordinate FMN. 198 to 199 (NT) contacts substrate. Residues Gly223, 249–250 (GG), and 271–272 (GT) contribute to the FMN site.

Belongs to the dihydroorotate dehydrogenase family. Type 1 subfamily. Heterotetramer of 2 PyrK and 2 PyrD type B subunits. FMN is required as a cofactor.

The protein localises to the cytoplasm. The enzyme catalyses (S)-dihydroorotate + NAD(+) = orotate + NADH + H(+). It participates in pyrimidine metabolism; UMP biosynthesis via de novo pathway; orotate from (S)-dihydroorotate (NAD(+) route): step 1/1. Its function is as follows. Catalyzes the conversion of dihydroorotate to orotate with NAD(+) as electron acceptor. This Streptococcus pneumoniae (strain ATCC BAA-255 / R6) protein is Dihydroorotate dehydrogenase B (NAD(+)), catalytic subunit (pyrDB).